Reading from the N-terminus, the 234-residue chain is Synaptogyrin-1 (234 aa).

An N-acetylmethionine modification is found at Met1. Over 1-23 (MEGGAYGAGKAGGAFDPYTLVRQ) the chain is Cytoplasmic. An MARVEL domain is found at 20 to 173 (LVRQPHTILR…QAVLAFQRYQ (154 aa)). The helical transmembrane segment at 24-44 (PHTILRVVSWVFSIVVFGSIV) threads the bilayer. The Lumenal segment spans residues 45–71 (NEGYLNNPEEEEEFCIYNRNPNACSYG). Residues 72–92 (VTVGVLAFLTCLVYLALDVYF) traverse the membrane as a helical segment. At 93 to 104 (PQISSVKDRKKA) the chain is on the cytoplasmic side. The helical transmembrane segment at 105 to 125 (VLSDIGVSAFWAFFWFVGFCF) threads the bilayer. Residues 126-148 (LANQWQVSKPKDNPLNEGTDAAR) are Lumenal-facing. Residues 149–169 (AAIAFSFFSIFTWAGQAVLAF) traverse the membrane as a helical segment. The Cytoplasmic portion of the chain corresponds to 170–234 (QRYQIGADSA…EPQGYQSQGY (65 aa)). Residues 201–234 (EPSAGSDPTGMGGTYQHPANAFDAEPQGYQSQGY) are disordered.

This sequence belongs to the synaptogyrin family. Nervous system (at protein level).

Its subcellular location is the cytoplasmic vesicle. The protein resides in the secretory vesicle. The protein localises to the synaptic vesicle membrane. It localises to the melanosome. Its function is as follows. May play a role in regulated exocytosis. Modulates the localization of synaptophysin/SYP into synaptic-like microvesicles and may therefore play a role in synaptic-like microvesicle formation and/or maturation. Involved in the regulation of short-term and long-term synaptic plasticity. This chain is Synaptogyrin-1, found in Rattus norvegicus (Rat).